A 506-amino-acid chain; its full sequence is MKEYRVYLERARSRQQDFLYPLIFREYIYGLAYSHNFNKSIFVENGGYDNKYSLLNVKRLITRMYQQNHLIISANDSNKNPFLGYNNNFYSQIISEGFAIVVEIPFFLQLSSSLEEAEIIKSYKNLRSIHSVFPFLEDKFTYLNYVSDIRIPYPIHLEILVQILRYWVKDVPFFHLLRVFLYHFCNWNCFIPTKKSISTFSKSNPRLFLFLYNFYVCEYESIFLFLRNKSYHLRLKSFSVFFERIFFYAKREHLVEVFSKDFSYTLPFFKDPNIHYVRYQGKCILASKNVPFLMNKWKYYFIHLWQCFFDVWSQPRTININQLSEHSFQLLGYFSNVRLNRSVVRSQMLENTFLIEIVSKKLDIIVPIIPLIRSLAKAKFCNVLGHPISKPVWADSSDFDIIERFLRICRNLSHYYNGSSKKKSLYRIKYILRLSCIKTLACKHKSTVRAFLKRSGSEELLEEFFTEEEEILSLIFPRDSFTLHRFHRNRIWYLDILFSNDLVNDE.

This sequence belongs to the intron maturase 2 family. MatK subfamily.

The protein localises to the plastid. Its subcellular location is the chloroplast. Functionally, usually encoded in the trnK tRNA gene intron. Probably assists in splicing its own and other chloroplast group II introns. This Trifolium microcephalum (Small-head clover) protein is Maturase K.